The primary structure comprises 149 residues: Placenta growth factor (149 aa).

Positions 1–18 (MPTVRLFTCFLQLLTGLV) are cleaved as a signal peptide. The N-linked (GlcNAc...) asparagine glycan is linked to Asn-33. Intrachain disulfides connect Cys-52–Cys-94, Cys-83–Cys-128, and Cys-87–Cys-130. N-linked (GlcNAc...) asparagine glycosylation is present at Asn-101.

This sequence belongs to the PDGF/VEGF growth factor family. Antiparallel homodimer; disulfide-linked. Also found as heterodimer with VEGFA/VEGF.

The protein resides in the secreted. Functionally, growth factor active in angiogenesis and endothelial cell growth, stimulating their proliferation and migration. It binds to the receptor FLT1/VEGFR-1. Also promotes cell tumor growth. The chain is Placenta growth factor (PGF) from Bos taurus (Bovine).